The chain runs to 121 residues: Ribosome-binding factor A (121 aa).

The protein belongs to the RbfA family. In terms of assembly, monomer. Binds 30S ribosomal subunits, but not 50S ribosomal subunits or 70S ribosomes.

It is found in the cytoplasm. In terms of biological role, one of several proteins that assist in the late maturation steps of the functional core of the 30S ribosomal subunit. Associates with free 30S ribosomal subunits (but not with 30S subunits that are part of 70S ribosomes or polysomes). Required for efficient processing of 16S rRNA. May interact with the 5'-terminal helix region of 16S rRNA. The chain is Ribosome-binding factor A from Agathobacter rectalis (strain ATCC 33656 / DSM 3377 / JCM 17463 / KCTC 5835 / VPI 0990) (Eubacterium rectale).